The primary structure comprises 450 residues: Tubulin beta-3 chain (450 aa).

An MREI motif motif is present at residues 1-4 (MREI). Positions 10, 11, 12, and 15 each coordinate GDP. Residue glutamine 11 participates in GTP binding. Glutamate 69 serves as a coordination point for GTP. A Mg(2+)-binding site is contributed by glutamate 69. 5 residues coordinate GDP: asparagine 99, serine 138, glycine 142, threonine 143, and glycine 144. The GTP site is built by serine 138, glycine 142, threonine 143, and glycine 144. Serine 172 carries the post-translational modification Phosphoserine; by CDK1. Residues aspartate 177, asparagine 204, tyrosine 222, and asparagine 226 each coordinate GDP. Residue asparagine 204 participates in GTP binding. Asparagine 226 provides a ligand contact to GTP. Residues 425-450 (YQDATAEEEGEMYEDDEEESEAQGPK) are disordered. Positions 429-450 (TAEEEGEMYEDDEEESEAQGPK) are enriched in acidic residues. Glutamate 438 bears the 5-glutamyl polyglutamate mark. Residue serine 444 is modified to Phosphoserine.

This sequence belongs to the tubulin family. Heterodimer of alpha- and beta-tubulin. A typical microtubule is a hollow water-filled tube with an outer diameter of 25 nm and an inner diameter of 15 nM. Alpha-beta heterodimers associate head-to-tail to form protofilaments running lengthwise along the microtubule wall with the beta-tubulin subunit facing the microtubule plus end conferring a structural polarity. Microtubules usually have 13 protofilaments but different protofilament numbers can be found in some organisms and specialized cells. Interacts with gamma-tubulin; the interaction allows microtubules to nucleate from the gamma-tubulin ring complex (gTuRC). Interacts with UNC5C (via cytoplasmic domain); this interaction is decreased by NTN1/Netrin-1. Interacts with NLRP5/MATER at cytoskeleton microtubules. Interacts with DPYSL5. Interacts with CFAP61. Requires Mg(2+) as cofactor. In terms of processing, some glutamate residues at the C-terminus are polyglutamylated, resulting in polyglutamate chains on the gamma-carboxyl group. Polyglutamylation plays a key role in microtubule severing by spastin (SPAST). SPAST preferentially recognizes and acts on microtubules decorated with short polyglutamate tails: severing activity by SPAST increases as the number of glutamates per tubulin rises from one to eight, but decreases beyond this glutamylation threshold. Glutamylation is also involved in cilia motility. Post-translationally, some glutamate residues at the C-terminus are monoglycylated but not polyglycylated due to the absence of functional TTLL10 in human. Monoglycylation is mainly limited to tubulin incorporated into cilia and flagella axonemes, which is required for their stability and maintenance. Flagella glycylation controls sperm motility. Both polyglutamylation and monoglycylation can coexist on the same protein on adjacent residues, and lowering glycylation levels increases polyglutamylation, and reciprocally. Phosphorylated on Ser-172 by CDK1 during the cell cycle, from metaphase to telophase, but not in interphase. This phosphorylation inhibits tubulin incorporation into microtubules. As to expression, expression is primarily restricted to central and peripheral nervous system. Greatly increased expression in most cancerous tissues.

The protein localises to the cytoplasm. Its subcellular location is the cytoskeleton. The protein resides in the cell projection. It is found in the growth cone. It localises to the lamellipodium. The protein localises to the filopodium. Its function is as follows. Tubulin is the major constituent of microtubules, protein filaments consisting of alpha- and beta-tubulin heterodimers. Microtubules grow by the addition of GTP-tubulin dimers to the microtubule end, where a stabilizing cap forms. Below the cap, alpha-beta tubulin heterodimers are in GDP-bound state, owing to GTPase activity of alpha-tubulin. TUBB3 plays a critical role in proper axon guidance and maintenance. Binding of NTN1/Netrin-1 to its receptor UNC5C might cause dissociation of UNC5C from polymerized TUBB3 in microtubules and thereby lead to increased microtubule dynamics and axon repulsion. Plays a role in dorsal root ganglion axon projection towards the spinal cord. The polypeptide is Tubulin beta-3 chain (TUBB3) (Homo sapiens (Human)).